We begin with the raw amino-acid sequence, 144 residues long: D-aminoacyl-tRNA deacylase (144 aa).

A Gly-cisPro motif, important for rejection of L-amino acids motif is present at residues 136-137 (GP).

Belongs to the DTD family. As to quaternary structure, homodimer.

The protein localises to the cytoplasm. The catalysed reaction is glycyl-tRNA(Ala) + H2O = tRNA(Ala) + glycine + H(+). It carries out the reaction a D-aminoacyl-tRNA + H2O = a tRNA + a D-alpha-amino acid + H(+). An aminoacyl-tRNA editing enzyme that deacylates mischarged D-aminoacyl-tRNAs. Also deacylates mischarged glycyl-tRNA(Ala), protecting cells against glycine mischarging by AlaRS. Acts via tRNA-based rather than protein-based catalysis; rejects L-amino acids rather than detecting D-amino acids in the active site. By recycling D-aminoacyl-tRNA to D-amino acids and free tRNA molecules, this enzyme counteracts the toxicity associated with the formation of D-aminoacyl-tRNA entities in vivo and helps enforce protein L-homochirality. The polypeptide is D-aminoacyl-tRNA deacylase (Haemophilus influenzae (strain PittEE)).